We begin with the raw amino-acid sequence, 319 residues long: uncharacterized protein (319 aa).

Transmembrane regions (helical) follow at residues 11–31, 43–63, 83–103, 108–128, 134–154, 195–215, 220–240, 260–280, and 284–304; these read GLWAGFIAFVIAMLALDLGVF, ALGWSALWVSLALVFGAGVWW, LSVDNIFVFVVIFSALRIPAL, VLFWGILSALALRAIMIFAGV, FHWLIYVFGGFLIITGVKLFL, LATPLLMALLLVEASDILFAL, AIFAVTTDPFIVFTSNIFAIL, KVGLSAVLVFVGTKMAIIDFV, and PEVSLSVIAGLLGASIVASLI.

The protein belongs to the TerC family.

It is found in the cell membrane. This is an uncharacterized protein from Myxococcus xanthus.